The chain runs to 471 residues: GDP-fucose protein O-fucosyltransferase 3 (471 aa).

Over 1–8 (MNRMWEKK) the chain is Cytoplasmic. A helical; Signal-anchor for type II membrane protein membrane pass occupies residues 9–29 (FWISCFFIILFFILVTLQVMV). Topologically, residues 30 to 471 (ELGRFEKRET…EFWNLVFKFQ (442 aa)) are lumenal. Asn102, Asn122, Asn160, and Asn310 each carry an N-linked (GlcNAc...) asparagine glycan. An intrachain disulfide couples Cys381 to Cys384. Residue Asn457 is glycosylated (N-linked (GlcNAc...) asparagine).

The protein belongs to the glycosyltransferase 10 family.

The protein resides in the endoplasmic reticulum membrane. It catalyses the reaction L-threonyl-[protein] + GDP-beta-L-fucose = 3-O-(alpha-L-fucosyl)-L-threonyl-[protein] + GDP + H(+). The catalysed reaction is L-seryl-[protein] + GDP-beta-L-fucose = 3-O-(alpha-L-fucosyl)-L-seryl-[protein] + GDP + H(+). The protein operates within protein modification; protein glycosylation. In terms of biological role, protein O-fucosyltransferase that specifically catalyzes O-fucosylation of serine or threonine residues in EMI domains of target proteins. Attaches fucose through an O-glycosidic linkage. O-fucosylation of EMI domain-containing proteins may be required for facilitating protein folding and secretion. The sequence is that of GDP-fucose protein O-fucosyltransferase 3 (fut10) from Xenopus tropicalis (Western clawed frog).